Here is a 161-residue protein sequence, read N- to C-terminus: ATP synthase subunit b (161 aa).

A helical membrane pass occupies residues 1-21 (MYLNATILGQVIAFILFVWFC).

This sequence belongs to the ATPase B chain family. As to quaternary structure, F-type ATPases have 2 components, F(1) - the catalytic core - and F(0) - the membrane proton channel. F(1) has five subunits: alpha(3), beta(3), gamma(1), delta(1), epsilon(1). F(0) has three main subunits: a(1), b(2) and c(10-14). The alpha and beta chains form an alternating ring which encloses part of the gamma chain. F(1) is attached to F(0) by a central stalk formed by the gamma and epsilon chains, while a peripheral stalk is formed by the delta and b chains.

The protein localises to the cell inner membrane. Its function is as follows. F(1)F(0) ATP synthase produces ATP from ADP in the presence of a proton or sodium gradient. F-type ATPases consist of two structural domains, F(1) containing the extramembraneous catalytic core and F(0) containing the membrane proton channel, linked together by a central stalk and a peripheral stalk. During catalysis, ATP synthesis in the catalytic domain of F(1) is coupled via a rotary mechanism of the central stalk subunits to proton translocation. Functionally, component of the F(0) channel, it forms part of the peripheral stalk, linking F(1) to F(0). The sequence is that of ATP synthase subunit b from Blochmanniella floridana.